The following is an 82-amino-acid chain: Small ribosomal subunit protein bS16 (82 aa).

It belongs to the bacterial ribosomal protein bS16 family.

The chain is Small ribosomal subunit protein bS16 from Klebsiella pneumoniae subsp. pneumoniae (strain ATCC 700721 / MGH 78578).